We begin with the raw amino-acid sequence, 694 residues long: DNA-directed RNA polymerase subunit beta' (694 aa).

Residues C69, C71, C87, and C90 each contribute to the Zn(2+) site. The Mg(2+) site is built by D489, D491, and D493.

It belongs to the RNA polymerase beta' chain family. RpoC1 subfamily. In terms of assembly, in plastids the minimal PEP RNA polymerase catalytic core is composed of four subunits: alpha, beta, beta', and beta''. When a (nuclear-encoded) sigma factor is associated with the core the holoenzyme is formed, which can initiate transcription. The cofactor is Mg(2+). Zn(2+) is required as a cofactor.

It localises to the plastid. It is found in the chloroplast. The catalysed reaction is RNA(n) + a ribonucleoside 5'-triphosphate = RNA(n+1) + diphosphate. DNA-dependent RNA polymerase catalyzes the transcription of DNA into RNA using the four ribonucleoside triphosphates as substrates. This Gossypium barbadense (Sea Island cotton) protein is DNA-directed RNA polymerase subunit beta'.